We begin with the raw amino-acid sequence, 518 residues long: Probable cyclic di-GMP phosphodiesterase PdeN (518 aa).

Helical transmembrane passes span 16-36 and 236-256; these read CIVAGVMIAILVSCLQFLVAW and VWYAFLLGGMSGTVVGLLCYY. The EAL domain maps to 261-514; the sequence is RMRPGREIMT…DFVRWLKKPY (254 aa).

The protein localises to the cell inner membrane. The catalysed reaction is 3',3'-c-di-GMP + H2O = 5'-phosphoguanylyl(3'-&gt;5')guanosine + H(+). Phosphodiesterase (PDE) that catalyzes the hydrolysis of cyclic-di-GMP (c-di-GMP) to 5'-pGpG. This Escherichia coli (strain K12) protein is Probable cyclic di-GMP phosphodiesterase PdeN.